Consider the following 198-residue polypeptide: Guanylate kinase (198 aa).

The Guanylate kinase-like domain occupies 8 to 188 (GRVVVLSGPS…ACSELVSLLV (181 aa)). 15 to 22 (GPSAVGKS) lines the ATP pocket.

The protein belongs to the guanylate kinase family.

The protein resides in the cytoplasm. The catalysed reaction is GMP + ATP = GDP + ADP. Its function is as follows. Essential for recycling GMP and indirectly, cGMP. The protein is Guanylate kinase of Mycobacterium sp. (strain MCS).